A 213-amino-acid chain; its full sequence is mRNA-decapping protein OPG121 (213 aa).

The N(7)-methyl-GTP site is built by E16 and R50. A Nudix hydrolase domain is found at K30–L209. Positions G111 to D132 match the Nudix box motif. E126 serves as the catalytic Nucleophile. Positions 126 and 130 each coordinate Mg(2+). Residue D151 coordinates N(7)-methyl-GTP. E183 is a Mg(2+) binding site.

Belongs to the Nudix hydrolase family. Mg(2+) serves as cofactor. It depends on Mn(2+) as a cofactor.

It catalyses the reaction a 5'-end (N(7)-methyl 5'-triphosphoguanosine)-guanosine in mRNA + H2O = a 5'-end phospho-guanosine in mRNA + N(7)-methyl-GDP + 2 H(+). Decapping enzyme that remove the protective 5'-cap from both host and viral mRNAs to commit transcripts for decay by the cellular exonuclease XRN1. Accelerates viral and cellular mRNA turnover to eliminate competing host mRNAs and allow stage-specific synthesis of viral proteins. Acceleration of the turnover of cellular transcripts may even promote the shutoff of host protein synthesis. In Vaccinia virus (strain Western Reserve) (VACV), this protein is mRNA-decapping protein OPG121 (OPG121).